The following is a 326-amino-acid chain: L-threo-3-hydroxyaspartate ammonia-lyase (326 aa).

Lysine 53 carries the N6-(pyridoxal phosphate)lysine modification. Pyridoxal 5'-phosphate contacts are provided by residues asparagine 80, 179–183 (GGGGL), and serine 304.

It belongs to the serine/threonine dehydratase family. In terms of assembly, monomer. The cofactor is pyridoxal 5'-phosphate. Mn(2+) is required as a cofactor. Requires Mg(2+) as cofactor. Ca(2+) serves as cofactor.

The catalysed reaction is (3S)-3-hydroxy-L-aspartate = oxaloacetate + NH4(+). Is strongly inhibited by hydroxylamine and EDTA in vitro. Catalyzes the deamination of L-threo-3-hydroxyaspartate to oxaloacetate and ammonia. Shows a high specificity towards L-threo-3-hydroxyaspartate as other 3-hydroxyaminoacids, i.e. D,L-erythro- and D-threo-3-hydroxyaspartate, D-threonine, L-threonine, D,L-allothreonine, D-serine, and L-serine, are not substrates for this enzyme. Exhibits no detectable serine racemase activity. Is responsible for the 3-hydroxyaspartate resistance of S.cerevisiae, and thus may be involved in the detoxification of naturally occurring 3-hydroxyaspartate. This is L-threo-3-hydroxyaspartate ammonia-lyase (SRY1) from Saccharomyces cerevisiae (strain ATCC 204508 / S288c) (Baker's yeast).